The primary structure comprises 546 residues: Chaperonin GroEL 4 (546 aa).

Residues 30 to 33 (TLGP), Lys51, 87 to 91 (DGTTT), Gly415, and Asp495 each bind ATP. The disordered stretch occupies residues 524 to 546 (APKDTPAAGQPGGPGAGGPGLDF). Gly residues predominate over residues 533–546 (QPGGPGAGGPGLDF).

It belongs to the chaperonin (HSP60) family. In terms of assembly, forms a cylinder of 14 subunits composed of two heptameric rings stacked back-to-back. Interacts with the co-chaperonin GroES.

Its subcellular location is the cytoplasm. The catalysed reaction is ATP + H2O + a folded polypeptide = ADP + phosphate + an unfolded polypeptide.. Together with its co-chaperonin GroES, plays an essential role in assisting protein folding. The GroEL-GroES system forms a nano-cage that allows encapsulation of the non-native substrate proteins and provides a physical environment optimized to promote and accelerate protein folding. This Paraburkholderia xenovorans (strain LB400) protein is Chaperonin GroEL 4.